The following is a 1394-amino-acid chain: Cyclic nucleotide-gated channel beta-1 (1394 aa).

3 disordered regions span residues 1–95 (MLGW…AHSS), 112–253 (VPQP…QDSA), and 271–675 (VIRG…SQNS). Residues 1 to 762 (MLGWVQRVLP…WKKYQFPQSI (762 aa)) lie on the Cytoplasmic side of the membrane. 2 stretches are compositionally biased toward polar residues: residues 68–86 (PQGT…QAQV) and 116–125 (AHSSRPSQNI). Composition is skewed to basic and acidic residues over residues 300-312 (EESH…VDPH) and 336-355 (DEEK…RIQE). Positions 356–387 (EKEDEEEEKEDGEEEEEEGREKEEEEGEEKEE) are enriched in acidic residues. The span at 388–408 (EEGREKEEEEGEKKEEEGREK) shows a compositional bias: basic and acidic residues. The segment covering 409 to 418 (EEEEGGEKED) has biased composition (acidic residues). Residues 419-433 (EEGREKEEEEGRGKE) are compositionally biased toward basic and acidic residues. Composition is skewed to acidic residues over residues 452-464 (EGRE…EEEQ) and 481-490 (DRSEESETQD). 2 stretches are compositionally biased toward low complexity: residues 493–508 (EVGG…GAQA) and 529–554 (EVGG…AQDQ). Over residues 654-675 (DPTSPQGTDDQDRATSTASQNS) the composition is skewed to polar residues. The segment at 671-681 (ASQNSAIINDR) is calmodulin-binding CaM1. An IQ-like motif is present at residues 682–692 (LQELVKLFKER). Positions 699-732 (KLIDPDVTSDEESPKPSPAKKAPEPAPEVKPAEA) are disordered. A helical membrane pass occupies residues 763-793 (DPLTNLMYILWLFFVVLAWNWNCWLIPVRWA). Over 794–798 (FPYQT) the chain is Extracellular. Residues 799 to 825 (PDNIHLWLLMDYLCDLIYLLDITVFQM) traverse the membrane as a helical segment. The Cytoplasmic segment spans residues 826–837 (RLQFVRGGDIIT). Residues 838 to 861 (DKKEMRNNYVKSQRFKMDMLCLLP) traverse the membrane as a helical segment. At 862–872 (LDLLYLKFGVN) the chain is on the extracellular side. The helical transmembrane segment at 873-887 (PLLRLPRCLKYMAFF) threads the bilayer. Topologically, residues 888-900 (EFNNRLESILSKA) are cytoplasmic. The segment at 900–999 (AYVYRVIRTT…IGQMRDVVGA (100 aa)) is ion conduction pathway. Residues 901 to 922 (YVYRVIRTTAYLLYSLHLNSCL) traverse the membrane as a helical segment. At 923–931 (YYWASAYEG) the chain is on the extracellular side. 2 consecutive transmembrane segments (helical) span residues 932–974 (LGST…EIVF) and 975–1002 (QGLN…AATA). The interval 959–962 (TIGG) is selectivity filter. At 1003-1394 (GQTYYRSCMD…EEARKEKEEE (392 aa)) the chain is on the cytoplasmic side. Positions 1082 to 1198 (RQMIFDMLKR…LLRKKARRML (117 aa)) are cyclic nucleotide-binding domain. 5 residues coordinate 3',5'-cyclic GMP: Gly-1143, Glu-1144, Ser-1146, Arg-1156, and Thr-1157. Arg-1156 is a binding site for 3',5'-cyclic AMP. The tract at residues 1261–1267 (QQQLLEQ) is calmodulin-binding CaM2. The interval 1265-1394 (LEQAKSSEDA…EEARKEKEEE (130 aa)) is disordered. A compositionally biased stretch (pro residues) spans 1285-1326 (EQPPRPEPPAPEAPAPEPTAPEPLAPEAPAPEAPAPSSPPPA). 2 stretches are compositionally biased toward basic and acidic residues: residues 1329 to 1345 (ERPE…EHPV) and 1364 to 1376 (VPEK…KKEE).

The protein belongs to the cyclic nucleotide-gated cation channel (TC 1.A.1.5) family. CNGB1 subfamily. The rod cyclic nucleotide-gated channel is a heterotetramer composed of CNGA1 and CNGB1 subunits with 3:1 stoichiometry. CNGA1:CNGB1 channel binds Ca(2+)-bound CALM1 via CaM1 and CaM2 regions of the CNGB1 subunit; this interaction modulates the affinity of the channel for cNMPs in response to intracellular Ca(2+) levels. The olfactory cyclic nucleotide-gated channel is a heterotetramer composed of CNGA2, CNGA4 and CNGB1 subunits with 2:1:1 stoichiometry. In terms of tissue distribution, retina, testis, kidney, heart and brain.

It is found in the membrane. The enzyme catalyses Ca(2+)(in) = Ca(2+)(out). It catalyses the reaction Na(+)(in) = Na(+)(out). The catalysed reaction is K(+)(in) = K(+)(out). It carries out the reaction NH4(+)(in) = NH4(+)(out). The enzyme catalyses Rb(+)(in) = Rb(+)(out). It catalyses the reaction Li(+)(in) = Li(+)(out). The catalysed reaction is Cs(+)(in) = Cs(+)(out). In terms of biological role, pore-forming subunit of the rod cyclic nucleotide-gated channel. Mediates rod photoresponses at dim light converting transient changes in intracellular cGMP levels into electrical signals. In the dark, cGMP levels are high and keep the channel open enabling a steady inward current carried by Na(+) and Ca(2+) ions that leads to membrane depolarization and neurotransmitter release from synaptic terminals. Upon photon absorption cGMP levels decline leading to channel closure and membrane hyperpolarization that ultimately slows neurotransmitter release and signals the presence of light, the end point of the phototransduction cascade. Pore-forming subunit of the olfactory cyclic nucleotide-gated channel. Operates in the cilia of olfactory sensory neurons where chemical stimulation of the odorant is converted to an electrical signal. Mediates odorant-induced cAMP-dependent Ca(2+) influx triggering neuron depolarization. The rise of intracellular Ca(2+) levels potentiates the olfactory response by activating Ca(2+)-dependent Cl(-) channels, but it also serves as a negative feedback signal to desensitize the channel for rapid adaptation to odorants. Conducts cGMP- and cAMP-gated ion currents, with permeability for monovalent and divalent cations. The selectivity for Ca(2+) over Na(+) increases with cGMP concentrations, whereas the selectivity among monovalent ions is independent of the cGMP levels. The sequence is that of Cyclic nucleotide-gated channel beta-1 from Bos taurus (Bovine).